The sequence spans 254 residues: MERKSYVFGNWKMHKTAKEAKDFLSIFCPFVKEISPASLVGIAPAFTTLSACCESIKEMDSSIWLGAQNVHQDSSGAFTGEVSLPMLQEFHVNFVLLGHSECRHIFHEEDATIALKVGAAARSGVVPVLCIGETLEARENGTTKEVLSNQLMLGLAQLPETAPVIIAYEPVWAIGTGKVASTADVQEVHAFCREVLSRIFSKEKSEIISILYGGSVKADNAEGFARCPDVDGLLVGGASLDPQGFANVLRNFNL.

A substrate-binding site is contributed by Asn-10 to Lys-12. His-99 acts as the Electrophile in catalysis. The active-site Proton acceptor is Glu-169. Substrate contacts are provided by residues Gly-175, Ser-215, and Gly-236–Gly-237.

This sequence belongs to the triosephosphate isomerase family. Homodimer.

Its subcellular location is the cytoplasm. It catalyses the reaction D-glyceraldehyde 3-phosphate = dihydroxyacetone phosphate. It functions in the pathway carbohydrate biosynthesis; gluconeogenesis. Its pathway is carbohydrate degradation; glycolysis; D-glyceraldehyde 3-phosphate from glycerone phosphate: step 1/1. In terms of biological role, involved in the gluconeogenesis. Catalyzes stereospecifically the conversion of dihydroxyacetone phosphate (DHAP) to D-glyceraldehyde-3-phosphate (G3P). The polypeptide is Triosephosphate isomerase (Chlamydia caviae (strain ATCC VR-813 / DSM 19441 / 03DC25 / GPIC) (Chlamydophila caviae)).